The chain runs to 417 residues: Serine hydroxymethyltransferase (417 aa).

Residues Leu-121 and 125–127 (GHL) contribute to the (6S)-5,6,7,8-tetrahydrofolate site. Lys-229 is modified (N6-(pyridoxal phosphate)lysine). A (6S)-5,6,7,8-tetrahydrofolate-binding site is contributed by 355–357 (SPF).

This sequence belongs to the SHMT family. In terms of assembly, homodimer. Pyridoxal 5'-phosphate serves as cofactor.

It localises to the cytoplasm. The catalysed reaction is (6R)-5,10-methylene-5,6,7,8-tetrahydrofolate + glycine + H2O = (6S)-5,6,7,8-tetrahydrofolate + L-serine. It functions in the pathway one-carbon metabolism; tetrahydrofolate interconversion. Its pathway is amino-acid biosynthesis; glycine biosynthesis; glycine from L-serine: step 1/1. Functionally, catalyzes the reversible interconversion of serine and glycine with tetrahydrofolate (THF) serving as the one-carbon carrier. This reaction serves as the major source of one-carbon groups required for the biosynthesis of purines, thymidylate, methionine, and other important biomolecules. Also exhibits THF-independent aldolase activity toward beta-hydroxyamino acids, producing glycine and aldehydes, via a retro-aldol mechanism. This is Serine hydroxymethyltransferase from Salmonella paratyphi C (strain RKS4594).